The following is a 283-amino-acid chain: NAD kinase (283 aa).

Catalysis depends on D65, which acts as the Proton acceptor. NAD(+) contacts are provided by residues 65 to 66 (DG), 139 to 140 (ND), R150, R167, D169, 180 to 185 (TGYSVS), and Q239.

Belongs to the NAD kinase family. It depends on a divalent metal cation as a cofactor.

The protein localises to the cytoplasm. The enzyme catalyses NAD(+) + ATP = ADP + NADP(+) + H(+). Functionally, involved in the regulation of the intracellular balance of NAD and NADP, and is a key enzyme in the biosynthesis of NADP. Catalyzes specifically the phosphorylation on 2'-hydroxyl of the adenosine moiety of NAD to yield NADP. This is NAD kinase from Nitratidesulfovibrio vulgaris (strain DSM 19637 / Miyazaki F) (Desulfovibrio vulgaris).